The following is a 91-amino-acid chain: Small ribosomal subunit protein uS15 (91 aa).

It belongs to the universal ribosomal protein uS15 family. In terms of assembly, part of the 30S ribosomal subunit. Forms a bridge to the 50S subunit in the 70S ribosome, contacting the 23S rRNA.

Its function is as follows. One of the primary rRNA binding proteins, it binds directly to 16S rRNA where it helps nucleate assembly of the platform of the 30S subunit by binding and bridging several RNA helices of the 16S rRNA. In terms of biological role, forms an intersubunit bridge (bridge B4) with the 23S rRNA of the 50S subunit in the ribosome. This is Small ribosomal subunit protein uS15 from Rickettsia canadensis (strain McKiel).